Reading from the N-terminus, the 212-residue chain is Guanylate kinase (212 aa).

One can recognise a Guanylate kinase-like domain in the interval 7–187; sequence GLLIVLSGPS…AADRIIAIIR (181 aa). 14 to 21 lines the ATP pocket; that stretch reads GPSGVGKA.

Belongs to the guanylate kinase family.

The protein resides in the cytoplasm. The catalysed reaction is GMP + ATP = GDP + ADP. Essential for recycling GMP and indirectly, cGMP. The chain is Guanylate kinase from Onion yellows phytoplasma (strain OY-M).